The following is a 317-amino-acid chain: tRNA pseudouridine synthase B (317 aa).

Asp47 functions as the Nucleophile in the catalytic mechanism.

The protein belongs to the pseudouridine synthase TruB family. Type 1 subfamily.

It carries out the reaction uridine(55) in tRNA = pseudouridine(55) in tRNA. Its function is as follows. Responsible for synthesis of pseudouridine from uracil-55 in the psi GC loop of transfer RNAs. In Shewanella sp. (strain ANA-3), this protein is tRNA pseudouridine synthase B.